The primary structure comprises 406 residues: [Pyruvate dehydrogenase (acetyl-transferring)] kinase isozyme 3, mitochondrial (406 aa).

The 232-residue stretch at 131 to 362 folds into the Histidine kinase domain; the sequence is IEYKEKFGFD…DAVIYLKALS (232 aa). Residue 247–254 participates in ATP binding; that stretch reads ELFKNSMR. Lys278 bears the N6-succinyllysine mark. ATP is bound by residues Asp287, 306-307, and 323-328; these read ST and GFGYGL. Residues 383–406 form a disordered region; it reads TPEADDWSNPSSEPRDASKYKAKQ. The span at 395-406 shows a compositional bias: basic and acidic residues; it reads EPRDASKYKAKQ.

It belongs to the PDK/BCKDK protein kinase family. As to quaternary structure, homodimer. Interacts with the pyruvate dehydrogenase complex subunit DLAT, and is part of the multimeric pyruvate dehydrogenase complex that contains multiple copies of pyruvate dehydrogenase (E1), dihydrolipoamide acetyltransferase (DLAT, E2) and lipoamide dehydrogenase (DLD, E3). Expressed in heart, skeletal muscle, spinal cord, as well as fetal and adult brain.

The protein localises to the mitochondrion matrix. It carries out the reaction L-seryl-[pyruvate dehydrogenase E1 alpha subunit] + ATP = O-phospho-L-seryl-[pyruvate dehydrogenase E1 alpha subunit] + ADP + H(+). With respect to regulation, activated by interaction with DLAT. Inhibited by AZD7545, dichloroacetate and radicicol. Its function is as follows. Inhibits pyruvate dehydrogenase activity by phosphorylation of the E1 subunit PDHA1, and thereby regulates glucose metabolism and aerobic respiration. Can also phosphorylate PDHA2. Decreases glucose utilization and increases fat metabolism in response to prolonged fasting, and as adaptation to a high-fat diet. Plays a role in glucose homeostasis and in maintaining normal blood glucose levels in function of nutrient levels and under starvation. Plays a role in the generation of reactive oxygen species. This chain is [Pyruvate dehydrogenase (acetyl-transferring)] kinase isozyme 3, mitochondrial (PDK3), found in Homo sapiens (Human).